Here is a 380-residue protein sequence, read N- to C-terminus: Chaperone protein DnaJ (380 aa).

Residues 5 to 70 enclose the J domain; the sequence is DFYEVLGVSK…NLRARYDQYG (66 aa). Residues 135–213 form a CR-type zinc finger; it reads GVSKEIKVPS…CHGEGRYQKT (79 aa). Zn(2+) is bound by residues cysteine 148, cysteine 151, cysteine 165, cysteine 168, cysteine 187, cysteine 190, cysteine 201, and cysteine 204. 4 CXXCXGXG motif repeats span residues 148-155, 165-172, 187-194, and 201-208; these read CEVCNGSG, CPTCHGAG, CPHCHGRG, and CRKCHGEG.

It belongs to the DnaJ family. In terms of assembly, homodimer. Zn(2+) is required as a cofactor.

It localises to the cytoplasm. Participates actively in the response to hyperosmotic and heat shock by preventing the aggregation of stress-denatured proteins and by disaggregating proteins, also in an autonomous, DnaK-independent fashion. Unfolded proteins bind initially to DnaJ; upon interaction with the DnaJ-bound protein, DnaK hydrolyzes its bound ATP, resulting in the formation of a stable complex. GrpE releases ADP from DnaK; ATP binding to DnaK triggers the release of the substrate protein, thus completing the reaction cycle. Several rounds of ATP-dependent interactions between DnaJ, DnaK and GrpE are required for fully efficient folding. Also involved, together with DnaK and GrpE, in the DNA replication of plasmids through activation of initiation proteins. This Aeromonas salmonicida (strain A449) protein is Chaperone protein DnaJ.